The sequence spans 119 residues: Holo-[acyl-carrier-protein] synthase (119 aa).

Residues Asp7 and Glu56 each contribute to the Mg(2+) site.

Belongs to the P-Pant transferase superfamily. AcpS family. Mg(2+) serves as cofactor.

It localises to the cytoplasm. It catalyses the reaction apo-[ACP] + CoA = holo-[ACP] + adenosine 3',5'-bisphosphate + H(+). Its function is as follows. Transfers the 4'-phosphopantetheine moiety from coenzyme A to a Ser of acyl-carrier-protein. The protein is Holo-[acyl-carrier-protein] synthase of Chlamydia trachomatis serovar L2 (strain ATCC VR-902B / DSM 19102 / 434/Bu).